The following is a 601-amino-acid chain: Sulfite reductase [NADPH] flavoprotein alpha-component (601 aa).

Residues 64 to 202 (ITLISASQTG…AAAEWRARIV (139 aa)) enclose the Flavodoxin-like domain. Residues 70–75 (SQTGNA), 117–120 (STQG), and 153–162 (LGDTSYEFFC) each bind FMN. Residues 236–450 (EEPLVASLSV…IEHNDNFRLP (215 aa)) enclose the FAD-binding FR-type domain. FAD-binding positions include T324, A358, 388 to 391 (RLYS), 406 to 408 (TVG), and 421 to 424 (GGAS). NADP(+)-binding positions include 521–522 (SR), 527–531 (KIYVQ), and D563. Residue Y601 coordinates FAD.

It belongs to the NADPH-dependent sulphite reductase flavoprotein subunit CysJ family. This sequence in the N-terminal section; belongs to the flavodoxin family. In the C-terminal section; belongs to the flavoprotein pyridine nucleotide cytochrome reductase family. In terms of assembly, alpha(8)-beta(8). The alpha component is a flavoprotein, the beta component is a hemoprotein. Requires FAD as cofactor. FMN is required as a cofactor.

The enzyme catalyses hydrogen sulfide + 3 NADP(+) + 3 H2O = sulfite + 3 NADPH + 4 H(+). The protein operates within sulfur metabolism; hydrogen sulfide biosynthesis; hydrogen sulfide from sulfite (NADPH route): step 1/1. Component of the sulfite reductase complex that catalyzes the 6-electron reduction of sulfite to sulfide. This is one of several activities required for the biosynthesis of L-cysteine from sulfate. The flavoprotein component catalyzes the electron flow from NADPH -&gt; FAD -&gt; FMN to the hemoprotein component. In Enterobacter sp. (strain 638), this protein is Sulfite reductase [NADPH] flavoprotein alpha-component.